A 344-amino-acid polypeptide reads, in one-letter code: N-acetyl-gamma-glutamyl-phosphate reductase (344 aa).

The active site involves Cys148.

The protein belongs to the NAGSA dehydrogenase family. Type 1 subfamily.

It localises to the cytoplasm. It catalyses the reaction N-acetyl-L-glutamate 5-semialdehyde + phosphate + NADP(+) = N-acetyl-L-glutamyl 5-phosphate + NADPH + H(+). Its pathway is amino-acid biosynthesis; L-arginine biosynthesis; N(2)-acetyl-L-ornithine from L-glutamate: step 3/4. In terms of biological role, catalyzes the NADPH-dependent reduction of N-acetyl-5-glutamyl phosphate to yield N-acetyl-L-glutamate 5-semialdehyde. This chain is N-acetyl-gamma-glutamyl-phosphate reductase, found in Geobacillus thermodenitrificans (strain NG80-2).